The sequence spans 197 residues: LexA repressor (197 aa).

Positions valine 28 to isoleucine 47 form a DNA-binding region, H-T-H motif. Active-site for autocatalytic cleavage activity residues include serine 119 and lysine 156.

The protein belongs to the peptidase S24 family. Homodimer.

It carries out the reaction Hydrolysis of Ala-|-Gly bond in repressor LexA.. Its function is as follows. Represses a number of genes involved in the response to DNA damage (SOS response), including recA and lexA. In the presence of single-stranded DNA, RecA interacts with LexA causing an autocatalytic cleavage which disrupts the DNA-binding part of LexA, leading to derepression of the SOS regulon and eventually DNA repair. This is LexA repressor from Thermotoga maritima (strain ATCC 43589 / DSM 3109 / JCM 10099 / NBRC 100826 / MSB8).